The primary structure comprises 205 residues: Ribonuclease HII (205 aa).

Residues 16–205 (VSEVGIDEVG…KSFLKKSKLI (190 aa)) form the RNase H type-2 domain. A divalent metal cation contacts are provided by D22, E23, and D118.

The protein belongs to the RNase HII family. The cofactor is Mn(2+). Requires Mg(2+) as cofactor.

It is found in the cytoplasm. It catalyses the reaction Endonucleolytic cleavage to 5'-phosphomonoester.. Endonuclease that specifically degrades the RNA of RNA-DNA hybrids. This is Ribonuclease HII from Prochlorococcus marinus (strain AS9601).